The following is a 1038-amino-acid chain: Inner tegument protein (1038 aa).

Positions Trp545–Pro1038 are interaction with large tegument protein.

The protein belongs to the herpesviridae inner tegument protein family. In terms of assembly, interacts (via C-terminus) with the large tegument protein/LTP (via N-terminus).

Its subcellular location is the virion tegument. It is found in the host cytoplasm. The protein resides in the host nucleus. It localises to the host Golgi apparatus. The protein localises to the host trans-Golgi network. Plays an essential role in cytoplasmic secondary envelopment during viral egress. Interacts with the capsid via the large tegument protein/LTP and participates in its transport to the host trans-Golgi network (TGN) where secondary envelopment occurs. Modulates tegumentation and capsid accumulation at the viral assembly complex. The chain is Inner tegument protein (21) from Homo sapiens (Human).